Here is a 540-residue protein sequence, read N- to C-terminus: NADH-quinone oxidoreductase subunit N (540 aa).

Transmembrane regions (helical) follow at residues 24–44, 54–74, 88–108, 158–178, 184–204, 219–239, 263–283, 295–315, 331–351, 357–377, 385–405, 428–448, 462–482, and 505–525; these read LSPM…EAFL, LVLA…LAGT, PTLF…LIIA, APGH…MLLF, LLTM…LCGL, YFLL…LLYG, ALIG…AVPF, PTPI…GAML, PVMW…AVTQ, MLAY…VAAN, MFYL…VTLV, VGGV…TSGF, GAVP…FFYV, and MFTA…GILP.

It belongs to the complex I subunit 2 family. As to quaternary structure, NDH-1 is composed of 14 different subunits. Subunits NuoA, H, J, K, L, M, N constitute the membrane sector of the complex.

The protein localises to the cell membrane. The enzyme catalyses a quinone + NADH + 5 H(+)(in) = a quinol + NAD(+) + 4 H(+)(out). Functionally, NDH-1 shuttles electrons from NADH, via FMN and iron-sulfur (Fe-S) centers, to quinones in the respiratory chain. The immediate electron acceptor for the enzyme in this species is believed to be a menaquinone. Couples the redox reaction to proton translocation (for every two electrons transferred, four hydrogen ions are translocated across the cytoplasmic membrane), and thus conserves the redox energy in a proton gradient. The chain is NADH-quinone oxidoreductase subunit N from Rhodococcus opacus (strain B4).